Here is a 475-residue protein sequence, read N- to C-terminus: MTQPVARDTAGTFSDYCISDISLAAWGRKEMIIAETEMPGLMAIREEYAATRPLQGARIAGSLHMTIQTAMLIETLVALGAEVRWASCNIFSTQDHAAAAIAAAGIPVFAYKGESLEEYWEFTHRIFEWHDGGTPNMILDDGGDATLLLHLGSDAEKDPSVIANPTCEEEQYLFASIKKRLAEKPGWYSKTAAAIKGVTEETTTGVHRLYQMHEKGKLKFPAINVNDSVTKSKFDNIYGCRESLVDGIKRATDVMIAGKVAVICGYGEVGKGCAQAMRGLQAQVWVTEIDPICALQAAMEGYRVVTMEYAADKADIFVTTTGNINVITHDHMKAMRHNAIVCNIGHFDNEIEVAALKQYQWENIKPQVDHIIFPDSKRIILLAEGRLVNLGCATGHPSYVMSSSFANQTLAQIELFCNPGKYPVGVYMLPKELDEKVARLQLKTLGAMLTELTDEQAAYIGVPKNGPYKSAHYRY.

Positions 66, 141, and 201 each coordinate substrate. Residue Thr-202–Thr-204 coordinates NAD(+). 2 residues coordinate substrate: Lys-231 and Asp-235. NAD(+) contacts are provided by residues Asn-236, Gly-265–Gly-270, Glu-288, Asn-323, Ile-344–His-346, and Asn-389.

It belongs to the adenosylhomocysteinase family. It depends on NAD(+) as a cofactor.

The protein localises to the cytoplasm. It catalyses the reaction S-adenosyl-L-homocysteine + H2O = L-homocysteine + adenosine. The protein operates within amino-acid biosynthesis; L-homocysteine biosynthesis; L-homocysteine from S-adenosyl-L-homocysteine: step 1/1. In terms of biological role, may play a key role in the regulation of the intracellular concentration of adenosylhomocysteine. The chain is Adenosylhomocysteinase from Geobacter sulfurreducens (strain ATCC 51573 / DSM 12127 / PCA).